A 269-amino-acid polypeptide reads, in one-letter code: dITP/XTP pyrophosphatase (269 aa).

22–27 contacts substrate; that stretch reads SNNAHK. Asp-82 (proton acceptor) is an active-site residue. Mg(2+) is bound at residue Asp-82. Residues Ser-83, 165 to 168, Lys-188, and 193 to 194 each bind substrate; these read FGYD and HR.

This sequence belongs to the HAM1 NTPase family. Homodimer. The cofactor is Mg(2+).

It catalyses the reaction XTP + H2O = XMP + diphosphate + H(+). It carries out the reaction dITP + H2O = dIMP + diphosphate + H(+). The enzyme catalyses ITP + H2O = IMP + diphosphate + H(+). In terms of biological role, pyrophosphatase that catalyzes the hydrolysis of nucleoside triphosphates to their monophosphate derivatives, with a high preference for the non-canonical purine nucleotides XTP (xanthosine triphosphate), dITP (deoxyinosine triphosphate) and ITP. Seems to function as a house-cleaning enzyme that removes non-canonical purine nucleotides from the nucleotide pool, thus preventing their incorporation into DNA/RNA and avoiding chromosomal lesions. This Treponema pallidum (strain Nichols) protein is dITP/XTP pyrophosphatase.